The chain runs to 428 residues: Somatostatin receptor type 3 (428 aa).

The Extracellular segment spans residues 1–45; it reads MAAVTYPSSVPTTLDPGNASSAWPLDTSLGNASAGTSLAGLAVSG. 2 N-linked (GlcNAc...) asparagine glycosylation sites follow: asparagine 18 and asparagine 31. A helical membrane pass occupies residues 46–71; it reads ILISLVYLVVCVVGLLGNSLVIYVVL. At 72-81 the chain is on the cytoplasmic side; sequence RHTSSPSVTS. Residues 82-103 traverse the membrane as a helical segment; the sequence is VYILNLALADELFMLGLPFLAA. Over 104–118 the chain is Extracellular; it reads QNALSYWPFGSLMCR. A disulfide bond links cysteine 117 and cysteine 192. Residues 119 to 140 traverse the membrane as a helical segment; that stretch reads LVMAVDGINQFTSIFCLTVMSV. The Cytoplasmic segment spans residues 141 to 162; it reads DRYLAVVHPTRSARWRTAPVAR. A helical membrane pass occupies residues 163–182; it reads MVSAAVWVASAVVVLPVVVF. Residues 183–206 are Extracellular-facing; that stretch reads SGVPRGMSTCHMQWPEPAAAWRTA. The chain crosses the membrane as a helical span at residues 207–232; sequence FIIYTAALGFFGPLLVICLCYLLIVV. The Cytoplasmic segment spans residues 233-266; it reads KVRSTTRRVRAPSCQWVQAPACQRRRRSERRVTR. A helical transmembrane segment spans residues 267 to 288; it reads MVVAVVALFVLCWMPFYLLNIV. Topologically, residues 289-302 are extracellular; sequence NVVCPLPEEPAFFG. A helical transmembrane segment spans residues 303 to 325; sequence LYFLVVALPYANSCANPILYGFL. Topologically, residues 326-428 are cytoplasmic; that stretch reads SYRFKQGFRR…GDKASTLSHL (103 aa). Phosphoserine occurs at positions 341, 346, and 351. The segment at 343-428 is disordered; that stretch reads RVRSQEPGSG…GDKASTLSHL (86 aa). A Phosphothreonine modification is found at threonine 357. The span at 357 to 370 shows a compositional bias: acidic residues; sequence TEEEEDEEEEERRE. Polar residues predominate over residues 385-412; that stretch reads RLSQIAQPGPSGQQQRPCTGTAKEQQLL.

Belongs to the G-protein coupled receptor 1 family. In terms of assembly, homodimer and heterodimer with SSTR2. Heterodimerization with SSTR2 inactivates SSTR3 receptor function. In terms of processing, phosphorylated. Phosphorylation increases upon somatostatin binding. Densely expressed in cerebellum and at moderate levels in the amygdala, cortex, striatum, spleen, liver and pituitary.

The protein resides in the cell membrane. Its function is as follows. Receptor for somatostatin-14 and -28. This receptor is coupled via pertussis toxin sensitive G proteins to inhibition of adenylyl cyclase. This Rattus norvegicus (Rat) protein is Somatostatin receptor type 3 (Sstr3).